The following is a 248-amino-acid chain: 3-deoxy-manno-octulosonate cytidylyltransferase (248 aa).

This sequence belongs to the KdsB family.

It is found in the cytoplasm. The catalysed reaction is 3-deoxy-alpha-D-manno-oct-2-ulosonate + CTP = CMP-3-deoxy-beta-D-manno-octulosonate + diphosphate. It functions in the pathway nucleotide-sugar biosynthesis; CMP-3-deoxy-D-manno-octulosonate biosynthesis; CMP-3-deoxy-D-manno-octulosonate from 3-deoxy-D-manno-octulosonate and CTP: step 1/1. It participates in bacterial outer membrane biogenesis; lipopolysaccharide biosynthesis. Activates KDO (a required 8-carbon sugar) for incorporation into bacterial lipopolysaccharide in Gram-negative bacteria. The sequence is that of 3-deoxy-manno-octulosonate cytidylyltransferase from Chlorobium phaeobacteroides (strain BS1).